A 550-amino-acid chain; its full sequence is Endonuclease/exonuclease/phosphatase family domain-containing protein 1 (550 aa).

Positions 39-68 (ERLNINTATEEELMTLPGVNRGVAQNIVEY) constitute a HhH domain. Over residues 194 to 213 (STNTNGGFTHPSPTSFSVQS) the composition is skewed to polar residues. Positions 194-216 (STNTNGGFTHPSPTSFSVQSDEP) are disordered.

The protein is Endonuclease/exonuclease/phosphatase family domain-containing protein 1 (eepd1) of Danio rerio (Zebrafish).